The following is a 443-amino-acid chain: Inactive polypeptide N-acetylgalactosaminyltransferase-like protein 5 (443 aa).

The Cytoplasmic segment spans residues 1 to 4 (MRNA). A helical; Signal-anchor for type II membrane protein transmembrane segment spans residues 5–27 (IIRCLFYGSLTFGIWTALLFIYL). Residues 28–443 (HHNHVSNWQK…PELEASVNRS (416 aa)) lie on the Lumenal side of the membrane. N-linked (GlcNAc...) asparagine glycosylation occurs at N87. 2 cysteine pairs are disulfide-bonded: C124-C355 and C346-C422. The tract at residues 133-243 (LPTASIVICF…RVWLEPLLHA (111 aa)) is catalytic subdomain A. 2 residues coordinate substrate: D174 and R204. D227 provides a ligand contact to Mn(2+). S228 serves as a coordination point for substrate. H229 contacts Mn(2+). The interval 301 to 363 (PIRSPAMSGG…PCSRVGHISK (63 aa)) is catalytic subdomain B. W332 contacts substrate. H360 serves as a coordination point for Mn(2+).

It belongs to the glycosyltransferase 2 family. GalNAc-T subfamily. The cofactor is Mn(2+). Expressed in testis.

The protein resides in the late endosome membrane. Functionally, probable inactive glycosyltransferase required during spermatid development. May participate in protein loading into the acrosomes and accumulation of ubiquitin-proteasome systems around the head-tail coupling apparatus region. This Macaca fascicularis (Crab-eating macaque) protein is Inactive polypeptide N-acetylgalactosaminyltransferase-like protein 5 (GALNTL5).